The following is a 420-amino-acid chain: Protein disulfide isomerase CRELD1 (420 aa).

The signal sequence occupies residues 1 to 29 (MAPRSSRGIAPAMLCGLSLFLGFPGLVWV). At 30–362 (QISVPPQSSP…GFFSEMTEDE (333 aa)) the chain is on the extracellular side. The short motif at 46–49 (CHTC) is the CXXC element. Intrachain disulfides connect Cys-46–Cys-49, Cys-155–Cys-169, Cys-163–Cys-181, and Cys-183–Cys-192. An EGF-like 1 domain is found at 153 to 193 (LPCPGGAERPCGGYGHCEGEGTRGGSGHCDCQAGYGGEACG). Asn-205 carries an N-linked (GlcNAc...) asparagine glycan. FU repeat units follow at residues 208–255 (HLVC…ERAS) and 268–315 (SYEC…AVCP). The CXXC motif lies at 278 to 281 (CLGC). 4 disulfide bridges follow: Cys-278/Cys-281, Cys-309/Cys-321, Cys-314/Cys-330, and Cys-332/Cys-343. Positions 305 to 344 (DVDECETAVCPGENQQCENTEGSYRCICADGYKQMEGICV) constitute an EGF-like 2; calcium-binding domain. The chain crosses the membrane as a helical span at residues 363–383 (LVVLQQMFFGVIICALATLAA). Lys-384 is a topological domain (cytoplasmic). Residues 385–405 (GDLVFTAIFIGAVAAMTGYWL) traverse the membrane as a helical segment. Residues 406-420 (SERSDRVLEGFIKGR) are Extracellular-facing.

Belongs to the CRELD family.

It is found in the membrane. It carries out the reaction Catalyzes the rearrangement of -S-S- bonds in proteins.. Protein disulfide isomerase. Promotes the localization of acetylcholine receptors (AChRs) to the plasma membrane. The sequence is that of Protein disulfide isomerase CRELD1 (CRELD1) from Bos taurus (Bovine).